The primary structure comprises 572 residues: uncharacterized protein (572 aa).

A disordered region spans residues 543 to 572 (AYKKSSNTNSTTNSMNPRRSTVSSEDWVLN). The segment covering 547 to 563 (SSNTNSTTNSMNPRRST) has biased composition (low complexity).

This is an uncharacterized protein from Acanthamoeba polyphaga (Amoeba).